The following is a 127-amino-acid chain: Large ribosomal subunit protein bL17 (127 aa).

It belongs to the bacterial ribosomal protein bL17 family. In terms of assembly, part of the 50S ribosomal subunit. Contacts protein L32.

The protein is Large ribosomal subunit protein bL17 of Actinobacillus pleuropneumoniae serotype 7 (strain AP76).